The following is a 211-amino-acid chain: Uridine kinase (211 aa).

12-19 (GGSGSGKT) is an ATP binding site.

The protein belongs to the uridine kinase family.

The protein localises to the cytoplasm. It carries out the reaction uridine + ATP = UMP + ADP + H(+). The catalysed reaction is cytidine + ATP = CMP + ADP + H(+). The protein operates within pyrimidine metabolism; CTP biosynthesis via salvage pathway; CTP from cytidine: step 1/3. It participates in pyrimidine metabolism; UMP biosynthesis via salvage pathway; UMP from uridine: step 1/1. This is Uridine kinase from Bacillus velezensis (strain DSM 23117 / BGSC 10A6 / LMG 26770 / FZB42) (Bacillus amyloliquefaciens subsp. plantarum).